We begin with the raw amino-acid sequence, 424 residues long: Imidazolonepropionase (424 aa).

Fe(3+)-binding residues include His-85 and His-87. Residues His-85 and His-87 each contribute to the Zn(2+) site. 4-imidazolone-5-propanoate is bound by residues Arg-94, Tyr-157, and His-190. Residue Tyr-157 coordinates N-formimidoyl-L-glutamate. Residue His-255 coordinates Fe(3+). His-255 serves as a coordination point for Zn(2+). Glu-258 serves as a coordination point for 4-imidazolone-5-propanoate. Position 329 (Asp-329) interacts with Fe(3+). Asp-329 is a Zn(2+) binding site. 2 residues coordinate N-formimidoyl-L-glutamate: Asn-331 and Gly-333. Residue Ser-334 coordinates 4-imidazolone-5-propanoate.

Belongs to the metallo-dependent hydrolases superfamily. HutI family. Zn(2+) serves as cofactor. It depends on Fe(3+) as a cofactor.

It is found in the cytoplasm. It catalyses the reaction 4-imidazolone-5-propanoate + H2O = N-formimidoyl-L-glutamate. It functions in the pathway amino-acid degradation; L-histidine degradation into L-glutamate; N-formimidoyl-L-glutamate from L-histidine: step 3/3. Catalyzes the hydrolytic cleavage of the carbon-nitrogen bond in imidazolone-5-propanoate to yield N-formimidoyl-L-glutamate. It is the third step in the universal histidine degradation pathway. The chain is Imidazolonepropionase from Brevibacillus brevis (strain 47 / JCM 6285 / NBRC 100599).